The chain runs to 256 residues: Imidazole glycerol phosphate synthase subunit HisF (256 aa).

Residues aspartate 11 and aspartate 130 contribute to the active site.

Belongs to the HisA/HisF family. In terms of assembly, heterodimer of HisH and HisF.

The protein resides in the cytoplasm. The enzyme catalyses 5-[(5-phospho-1-deoxy-D-ribulos-1-ylimino)methylamino]-1-(5-phospho-beta-D-ribosyl)imidazole-4-carboxamide + L-glutamine = D-erythro-1-(imidazol-4-yl)glycerol 3-phosphate + 5-amino-1-(5-phospho-beta-D-ribosyl)imidazole-4-carboxamide + L-glutamate + H(+). Its pathway is amino-acid biosynthesis; L-histidine biosynthesis; L-histidine from 5-phospho-alpha-D-ribose 1-diphosphate: step 5/9. Functionally, IGPS catalyzes the conversion of PRFAR and glutamine to IGP, AICAR and glutamate. The HisF subunit catalyzes the cyclization activity that produces IGP and AICAR from PRFAR using the ammonia provided by the HisH subunit. This chain is Imidazole glycerol phosphate synthase subunit HisF, found in Prochlorococcus marinus (strain MIT 9301).